The sequence spans 269 residues: D-aminoacyl-tRNA deacylase (269 aa).

Belongs to the DtdA deacylase family. As to quaternary structure, monomer. The cofactor is Zn(2+).

It catalyses the reaction a D-aminoacyl-tRNA + H2O = a tRNA + a D-alpha-amino acid + H(+). It carries out the reaction glycyl-tRNA(Ala) + H2O = tRNA(Ala) + glycine + H(+). In terms of biological role, D-aminoacyl-tRNA deacylase with broad substrate specificity. By recycling D-aminoacyl-tRNA to D-amino acids and free tRNA molecules, this enzyme counteracts the toxicity associated with the formation of D-aminoacyl-tRNA entities in vivo. The protein is D-aminoacyl-tRNA deacylase of Caldivirga maquilingensis (strain ATCC 700844 / DSM 13496 / JCM 10307 / IC-167).